The chain runs to 148 residues: Large ribosomal subunit protein bL9 (148 aa).

The protein belongs to the bacterial ribosomal protein bL9 family.

Its function is as follows. Binds to the 23S rRNA. This chain is Large ribosomal subunit protein bL9, found in Parafrankia sp. (strain EAN1pec).